We begin with the raw amino-acid sequence, 426 residues long: Glutamate-1-semialdehyde 2,1-aminomutase (426 aa).

Lys265 is modified (N6-(pyridoxal phosphate)lysine).

This sequence belongs to the class-III pyridoxal-phosphate-dependent aminotransferase family. HemL subfamily. In terms of assembly, homodimer. Pyridoxal 5'-phosphate serves as cofactor.

It is found in the cytoplasm. The catalysed reaction is (S)-4-amino-5-oxopentanoate = 5-aminolevulinate. Its pathway is porphyrin-containing compound metabolism; protoporphyrin-IX biosynthesis; 5-aminolevulinate from L-glutamyl-tRNA(Glu): step 2/2. The protein is Glutamate-1-semialdehyde 2,1-aminomutase of Shigella sonnei (strain Ss046).